Reading from the N-terminus, the 185-residue chain is MTTHPIHLHHDDPAHGGERACMSRRSFLLAGGAMVTLASLPGTAVAALKALKADYPAVKIGKLSRLKTGEPLEFAYPYPDVNNILVKLGAEAGGGVGPQADVVAFNQQCTHMGGPLQGTYKAKHQALGPCPLHLTTFDLTRHGMVISGHATESLPQIVLEVRGDDIYAVGVQGLIYGYSSNRAGR.

Residues 1-46 (MTTHPIHLHHDDPAHGGERACMSRRSFLLAGGAMVTLASLPGTAVA) constitute a signal peptide (tat-type signal). Residues 69–168 (GEPLEFAYPY…LEVRGDDIYA (100 aa)) form the Rieske domain. Positions 109, 111, 130, and 133 each coordinate [2Fe-2S] cluster.

It belongs to the AOX family. The iodate reductase (Idr) complex is composed of a molybdopterin-dependent iodate reductase (IdrA and IdrB subunits) and two associated peroxidases (IdrP1 and IdrP2). Requires [2Fe-2S] cluster as cofactor. Post-translationally, predicted to be exported by the Tat system. The position of the signal peptide cleavage has not been experimentally proven.

Its subcellular location is the periplasm. Involved in iodate respiration. May accept electrons from cytochrome c551, and catalyze the reduction of iodate (IO(3)(-)) to produce the chemically unstable intermediate hypoiodous acid (HIO). This intermediate then undergoes abiotic disproportionation to yield two molecules of iodide (I(-)) and one molecule of iodate. The resultant iodate subsequently cycles back into the reductive pathway. The initial reduction of iodate may inadvertently produce low levels of incidental toxic H(2)O(2), which is detoxified by IdrP1 and IdrP2. The chain is Iodate reductase subunit IdrB from Denitromonas iodatirespirans.